The following is a 51-amino-acid chain: Astexin-1 (51 aa).

A propeptide spanning residues 1 to 28 (MHTPIISETVQPKTAGLIVLGKASAETR) is cleaved from the precursor. Positions 29-37 (GLSQGVEPD) form a cross-link, isoaspartyl glycine isopeptide (Gly-Asp).

Post-translationally, this lasso peptide is probably hydrolyzed to a linear form by the isopeptidase AtxE1, in vivo.

Functionally, shows weak antimicrobial activity against its phylogenetic relative Caulobacter crescentus. Does not show activity against other bacteria tested (E.coli, Vibrio sp, Burkhoderia thailandensis, and Salmonella newport). The polypeptide is Astexin-1 (Asticcacaulis excentricus (strain ATCC 15261 / DSM 4724 / KCTC 12464 / NCIMB 9791 / VKM B-1370 / CB 48)).